The sequence spans 675 residues: DNA ligase (675 aa).

Residues 34–38 (DYAFD), 83–84 (SL), and Glu117 each bind NAD(+). The active-site N6-AMP-lysine intermediate is the Lys119. NAD(+)-binding residues include Arg140, Glu184, Lys297, and Lys321. Residues Cys415, Cys418, Cys433, and Cys439 each coordinate Zn(2+). One can recognise a BRCT domain in the interval 598–675 (LVNRNFEGMK…GEEEFEAMLF (78 aa)).

This sequence belongs to the NAD-dependent DNA ligase family. LigA subfamily. It depends on Mg(2+) as a cofactor. Requires Mn(2+) as cofactor.

The enzyme catalyses NAD(+) + (deoxyribonucleotide)n-3'-hydroxyl + 5'-phospho-(deoxyribonucleotide)m = (deoxyribonucleotide)n+m + AMP + beta-nicotinamide D-nucleotide.. DNA ligase that catalyzes the formation of phosphodiester linkages between 5'-phosphoryl and 3'-hydroxyl groups in double-stranded DNA using NAD as a coenzyme and as the energy source for the reaction. It is essential for DNA replication and repair of damaged DNA. The polypeptide is DNA ligase (Prosthecochloris aestuarii (strain DSM 271 / SK 413)).